The sequence spans 328 residues: DNA-directed RNA polymerase subunit alpha (328 aa).

Residues M1–E231 are alpha N-terminal domain (alpha-NTD). Residues F248–R328 are alpha C-terminal domain (alpha-CTD).

Belongs to the RNA polymerase alpha chain family. Homodimer. The RNAP catalytic core consists of 2 alpha, 1 beta, 1 beta' and 1 omega subunit. When a sigma factor is associated with the core the holoenzyme is formed, which can initiate transcription.

The enzyme catalyses RNA(n) + a ribonucleoside 5'-triphosphate = RNA(n+1) + diphosphate. Its function is as follows. DNA-dependent RNA polymerase catalyzes the transcription of DNA into RNA using the four ribonucleoside triphosphates as substrates. In Leptothrix cholodnii (strain ATCC 51168 / LMG 8142 / SP-6) (Leptothrix discophora (strain SP-6)), this protein is DNA-directed RNA polymerase subunit alpha.